Reading from the N-terminus, the 456-residue chain is O-phospho-L-seryl-tRNA:Cys-tRNA synthase 2 (456 aa).

Residues 146–147 (AR), asparagine 251, and 274–276 (SGH) contribute to the pyridoxal 5'-phosphate site. N6-(pyridoxal phosphate)lysine is present on lysine 277.

The protein belongs to the SepCysS family. As to quaternary structure, homodimer. Interacts with SepRS. It depends on pyridoxal 5'-phosphate as a cofactor.

It carries out the reaction O-phospho-L-seryl-tRNA(Cys) + hydrogen sulfide + H(+) = L-cysteinyl-tRNA(Cys) + phosphate. Functionally, converts O-phospho-L-seryl-tRNA(Cys) (Sep-tRNA(Cys)) to L-cysteinyl-tRNA(Cys) (Cys-tRNA(Cys)). The chain is O-phospho-L-seryl-tRNA:Cys-tRNA synthase 2 from Methanospirillum hungatei JF-1 (strain ATCC 27890 / DSM 864 / NBRC 100397 / JF-1).